A 322-amino-acid chain; its full sequence is Glycerate dehydrogenase (322 aa).

Residues 158-159 (SI), D178, 239-241 (TAR), and D265 contribute to the NAD(+) site. R241 is a catalytic residue. E270 is a catalytic residue. The Proton donor role is filled by H288. 288–291 (HIGS) serves as a coordination point for NAD(+).

The protein belongs to the D-isomer specific 2-hydroxyacid dehydrogenase family. In terms of assembly, homodimer.

It carries out the reaction (R)-glycerate + NAD(+) = 3-hydroxypyruvate + NADH + H(+). It functions in the pathway one-carbon metabolism; formaldehyde assimilation via serine pathway. Its function is as follows. Active on hydroxypyruvate and glyoxylate. This chain is Glycerate dehydrogenase, found in Hyphomicrobium methylovorum.